The primary structure comprises 247 residues: Pleckstrin homology domain-containing family F member 2 (247 aa).

A PH domain is found at 35–131 (VLIGEGVLTK…WMSHINKCVS (97 aa)). An FYVE-type zinc finger spans residues 152-212 (DSEATVCMRC…VCEFCYKQLS (61 aa)). Cys-158, Cys-161, Cys-175, Cys-178, Cys-183, Cys-186, Cys-204, and Cys-207 together coordinate Zn(2+). Residues 213-247 (TGATLPPRSDSYSRQGSDFGSNNISDDDDDDDSSD) are disordered. Over residues 222–236 (DSYSRQGSDFGSNNI) the composition is skewed to polar residues. The span at 237-247 (SDDDDDDDSSD) shows a compositional bias: acidic residues.

The protein resides in the early endosome membrane. It localises to the endoplasmic reticulum. Its function is as follows. May play a role in early endosome fusion upstream of RAB5, hence regulating receptor trafficking and fluid-phase transport. Enhances cellular sensitivity to TNF-induced apoptosis. In Danio rerio (Zebrafish), this protein is Pleckstrin homology domain-containing family F member 2 (plekhf2).